Here is a 416-residue protein sequence, read N- to C-terminus: Phosphatidylserine decarboxylase proenzyme, mitochondrial (416 aa).

Residues methionine 1 to leucine 67 lie on the Mitochondrial matrix side of the membrane. The helical transmembrane segment at arginine 68–serine 86 threads the bilayer. Topologically, residues tryptophan 87–leucine 416 are mitochondrial intermembrane. Catalysis depends on charge relay system; for autoendoproteolytic cleavage activity residues aspartate 198, histidine 274, and serine 385. The active-site Schiff-base intermediate with substrate; via pyruvic acid; for decarboxylase activity is the serine 385. Serine 385 carries the pyruvic acid (Ser); by autocatalysis modification.

This sequence belongs to the phosphatidylserine decarboxylase family. PSD-B subfamily. Eukaryotic type I sub-subfamily. In terms of assembly, heterodimer of a large membrane-associated beta subunit and a small pyruvoyl-containing alpha subunit. Pyruvate is required as a cofactor. Post-translationally, is synthesized initially as an inactive proenzyme. Formation of the active enzyme involves a self-maturation process in which the active site pyruvoyl group is generated from an internal serine residue via an autocatalytic post-translational modification. Two non-identical subunits are generated from the proenzyme in this reaction, and the pyruvate is formed at the N-terminus of the alpha chain, which is derived from the carboxyl end of the proenzyme. The autoendoproteolytic cleavage occurs by a canonical serine protease mechanism, in which the side chain hydroxyl group of the serine supplies its oxygen atom to form the C-terminus of the beta chain, while the remainder of the serine residue undergoes an oxidative deamination to produce ammonia and the pyruvoyl prosthetic group on the alpha chain. During this reaction, the Ser that is part of the protease active site of the proenzyme becomes the pyruvoyl prosthetic group, which constitutes an essential element of the active site of the mature decarboxylase.

It is found in the mitochondrion inner membrane. The protein resides in the cytoplasm. The protein localises to the lipid droplet. The enzyme catalyses a 1,2-diacyl-sn-glycero-3-phospho-L-serine + H(+) = a 1,2-diacyl-sn-glycero-3-phosphoethanolamine + CO2. Its pathway is phospholipid metabolism; phosphatidylethanolamine biosynthesis. Its function is as follows. Catalyzes the formation of phosphatidylethanolamine (PtdEtn) from phosphatidylserine (PtdSer). Plays a central role in phospholipid metabolism and in the interorganelle trafficking of phosphatidylserine. May be involved in lipid droplet biogenesis at the endoplasmic reticulum membrane. This is Phosphatidylserine decarboxylase proenzyme, mitochondrial from Bos taurus (Bovine).